Reading from the N-terminus, the 425-residue chain is Podosporapepsin (425 aa).

Residues 1-28 form the signal peptide; that stretch reads MVSLTDLFLASLLVPTSPWLCLPPRIDT. Positions 29-91 are cleaved as a propeptide — activation peptide; it reads IDQRGGRVTL…QEEAFARIKR (63 aa). The region spanning 108-419 is the Peptidase A1 domain; it reads YVTPVTIGTP…GTNPPRIGFA (312 aa). Aspartate 126 is an active-site residue. N-linked (GlcNAc...) asparagine glycosylation is found at asparagine 184 and asparagine 273. The active site involves aspartate 310. The cysteines at positions 346 and 381 are disulfide-linked. Asparagine 370 carries N-linked (GlcNAc...) asparagine glycosylation.

Belongs to the peptidase A1 family.

This Podospora anserina (Pleurage anserina) protein is Podosporapepsin (PAPA).